The sequence spans 322 residues: Malate dehydrogenase (322 aa).

NAD(+)-binding positions include G10–G15 and D34. Positions 83 and 89 each coordinate substrate. NAD(+)-binding positions include N96 and I119–N121. N121 and R152 together coordinate substrate. H176 functions as the Proton acceptor in the catalytic mechanism.

It belongs to the LDH/MDH superfamily. MDH type 3 family.

The enzyme catalyses (S)-malate + NAD(+) = oxaloacetate + NADH + H(+). In terms of biological role, catalyzes the reversible oxidation of malate to oxaloacetate. The protein is Malate dehydrogenase of Bradyrhizobium diazoefficiens (strain JCM 10833 / BCRC 13528 / IAM 13628 / NBRC 14792 / USDA 110).